A 459-amino-acid polypeptide reads, in one-letter code: cAMP-dependent protein kinase regulatory subunit (459 aa).

The dimerization and phosphorylation stretch occupies residues 30–219 (QFCANYFNTK…TLANNLKNNF (190 aa)). 2 disordered regions span residues 78–109 (VNDRQPSFKSPFGVNDPHSNHDEDPHAKDTKT) and 125–168 (FDVK…PSSK). A compositionally biased stretch (basic and acidic residues) spans 95-109 (HSNHDEDPHAKDTKT). Positions 146 to 168 (KPSSSSQPNQQSASASSKTPSSK) are enriched in low complexity. Residue Ser180 is modified to Phosphoserine. 3',5'-cyclic AMP contacts are provided by residues 220–335 (LFKQ…FLKD), Glu285, Arg294, 338–454 (VLKS…KSQD), Glu404, and Arg413.

It belongs to the cAMP-dependent kinase regulatory chain family. Tetramer, composed of 2 regulatory (R) and 2 catalytic (C) subunits. In the presence of cAMP it dissociates into 2 active monomeric C subunits and an R dimer.

The sequence is that of cAMP-dependent protein kinase regulatory subunit (BCY1) from Candida albicans (strain SC5314 / ATCC MYA-2876) (Yeast).